We begin with the raw amino-acid sequence, 233 residues long: ATP synthase subunit a, chloroplastic (233 aa).

4 consecutive transmembrane segments (helical) span residues 27-47 (VLLI…LGTL), 84-104 (VPFV…GALI), 122-142 (DINT…YAGF), and 192-212 (VLCL…GIFA).

This sequence belongs to the ATPase A chain family. F-type ATPases have 2 components, CF(1) - the catalytic core - and CF(0) - the membrane proton channel. CF(1) has five subunits: alpha(3), beta(3), gamma(1), delta(1), epsilon(1). CF(0) has four main subunits: a, b, b' and c.

The protein resides in the plastid. It localises to the chloroplast thylakoid membrane. In terms of biological role, key component of the proton channel; it plays a direct role in the translocation of protons across the membrane. This Ochrosphaera neapolitana protein is ATP synthase subunit a, chloroplastic.